Consider the following 334-residue polypeptide: Porphobilinogen deaminase (334 aa).

The residue at position 250 (cysteine 250) is an S-(dipyrrolylmethanemethyl)cysteine.

This sequence belongs to the HMBS family. As to quaternary structure, monomer. Dipyrromethane is required as a cofactor.

The enzyme catalyses 4 porphobilinogen + H2O = hydroxymethylbilane + 4 NH4(+). Its pathway is porphyrin-containing compound metabolism; protoporphyrin-IX biosynthesis; coproporphyrinogen-III from 5-aminolevulinate: step 2/4. Functionally, tetrapolymerization of the monopyrrole PBG into the hydroxymethylbilane pre-uroporphyrinogen in several discrete steps. The polypeptide is Porphobilinogen deaminase (Cutibacterium acnes (strain DSM 16379 / KPA171202) (Propionibacterium acnes)).